A 48-amino-acid chain; its full sequence is Protein TUNAR (48 aa).

The tract at residues 1 to 20 (MVITSGNDEDRGGQEKESKE) is disordered. The segment covering 8–20 (DEDRGGQEKESKE) has biased composition (basic and acidic residues). The helical transmembrane segment at 24–44 (LAMLGIIGTILNLIVIIFVYI) threads the bilayer.

In terms of assembly, interacts with ATPase ATP2A2/SERCA2. Interacts with ATPase ATP2A3/SERCA3; the interaction occurs at low levels in low glucose conditions and is increased by high glucose levels. In terms of tissue distribution, in the adult, expressed in Purkinje cells in the cerebellum, in motor neurons and interneurons in the spinal cord and in neurons of the cortex, hippocampus and thalamus (at protein level). Also detected in the developing cortex, hippocampus and thalamus at embryonic day E15.5 (at protein level).

The protein localises to the endoplasmic reticulum membrane. It is found in the extracellular vesicle membrane. Functionally, in neurons, plays a role in the regulation of intracellular Ca(2+), possibly by acting as an activator of ATP2A2/SERCA2, thus increasing the efficiency with which Ca(2+) is removed from the cytoplasm. Inhibits differentiation of embryonic stem cells into neurons and inhibits neurite outgrowth, likely as a result of its role in intracellular Ca(2+) regulation. In pancreatic beta cells, lowers Ca(2+) levels in the endoplasmic reticulum and enhances glucose-stimulated insulin secretion. The protein is Protein TUNAR of Mus musculus (Mouse).